The primary structure comprises 731 residues: Lanosterol synthase ERG7 (731 aa).

An N-acetylthreonine modification is found at T2. The stretch at 125-167 (RIELIRYIVNTAHPVDGGWGLHSVDKSTVFGTVLNYVILRLLG) is one PFTB 1 repeat. D456 functions as the Proton donor in the catalytic mechanism. The stretch at 615–661 (VRKGCDFLVSKQMKDGGWGESMKSSELHSYVDSEKSLVVQTAWALIA) is one PFTB 2 repeat.

It belongs to the terpene cyclase/mutase family.

It localises to the lipid droplet. It is found in the endoplasmic reticulum membrane. The enzyme catalyses (S)-2,3-epoxysqualene = lanosterol. The protein operates within terpene metabolism; lanosterol biosynthesis; lanosterol from farnesyl diphosphate: step 3/3. Catalytic activity requires the presence of ERG27. Its function is as follows. Lanosterol synthase; part of the third module of ergosterol biosynthesis pathway that includes the late steps of the pathway. ERG7 catalyzes the cyclization of (S)-2,3 oxidosqualene to lanosterol, a reaction that forms the sterol core. The third module or late pathway involves the ergosterol synthesis itself through consecutive reactions that mainly occur in the endoplasmic reticulum (ER) membrane. Firstly, the squalene synthase ERG9 catalyzes the condensation of 2 farnesyl pyrophosphate moieties to form squalene, which is the precursor of all steroids. Squalene synthase is crucial for balancing the incorporation of farnesyl diphosphate (FPP) into sterol and nonsterol isoprene synthesis. Secondly, the squalene epoxidase ERG1 catalyzes the stereospecific oxidation of squalene to (S)-2,3-epoxysqualene, which is considered to be a rate-limiting enzyme in steroid biosynthesis. Then, the lanosterol synthase ERG7 catalyzes the cyclization of (S)-2,3 oxidosqualene to lanosterol, a reaction that forms the sterol core. In the next steps, lanosterol is transformed to zymosterol through a complex process involving various demethylation, reduction and desaturation reactions. The lanosterol 14-alpha-demethylase ERG11 (also known as CYP51) catalyzes C14-demethylation of lanosterol to produce 4,4'-dimethyl cholesta-8,14,24-triene-3-beta-ol, which is critical for ergosterol biosynthesis. The C-14 reductase ERG24 reduces the C14=C15 double bond of 4,4-dimethyl-cholesta-8,14,24-trienol to produce 4,4-dimethyl-cholesta-8,24-dienol. 4,4-dimethyl-cholesta-8,24-dienol is substrate of the C-4 demethylation complex ERG25-ERG26-ERG27 in which ERG25 catalyzes the three-step monooxygenation required for the demethylation of 4,4-dimethyl and 4alpha-methylsterols, ERG26 catalyzes the oxidative decarboxylation that results in a reduction of the 3-beta-hydroxy group at the C-3 carbon to an oxo group, and ERG27 is responsible for the reduction of the keto group on the C-3. ERG28 has a role as a scaffold to help anchor ERG25, ERG26 and ERG27 to the endoplasmic reticulum and ERG29 regulates the activity of the iron-containing C4-methylsterol oxidase ERG25. Then, the sterol 24-C-methyltransferase ERG6 catalyzes the methyl transfer from S-adenosyl-methionine to the C-24 of zymosterol to form fecosterol. The C-8 sterol isomerase ERG2 catalyzes the reaction which results in unsaturation at C-7 in the B ring of sterols and thus converts fecosterol to episterol. The sterol-C5-desaturase ERG3 then catalyzes the introduction of a C-5 double bond in the B ring to produce 5-dehydroepisterol. The C-22 sterol desaturase ERG5 further converts 5-dehydroepisterol into ergosta-5,7,22,24(28)-tetraen-3beta-ol by forming the C-22(23) double bond in the sterol side chain. Finally, ergosta-5,7,22,24(28)-tetraen-3beta-ol is substrate of the C-24(28) sterol reductase ERG4 to produce ergosterol. In Saccharomyces cerevisiae (strain ATCC 204508 / S288c) (Baker's yeast), this protein is Lanosterol synthase ERG7.